A 402-amino-acid polypeptide reads, in one-letter code: Acetate kinase (402 aa).

Mg(2+) is bound at residue asparagine 7. Position 14 (lysine 14) interacts with ATP. Arginine 95 contacts substrate. The active-site Proton donor/acceptor is the aspartate 152. Residues 212–216 (HLGNG), 286–288 (DMR), and 334–338 (GIGEN) each bind ATP. Position 388 (glutamate 388) interacts with Mg(2+).

Belongs to the acetokinase family. Homodimer. Requires Mg(2+) as cofactor. The cofactor is Mn(2+).

The protein localises to the cytoplasm. It catalyses the reaction acetate + ATP = acetyl phosphate + ADP. The protein operates within metabolic intermediate biosynthesis; acetyl-CoA biosynthesis; acetyl-CoA from acetate: step 1/2. Functionally, catalyzes the formation of acetyl phosphate from acetate and ATP. Can also catalyze the reverse reaction. The protein is Acetate kinase of Oleidesulfovibrio alaskensis (strain ATCC BAA-1058 / DSM 17464 / G20) (Desulfovibrio alaskensis).